The following is a 128-amino-acid chain: MAREFKRSDRVAQEIQKEIAVILQREVKDPRIGMVTVSDVEVSSDLSYAKIFVTFLFDHDEMAIEQGMKGLEKASPYIRSLLGKAMRLRIVPEIRFIYDQSLVEGMRMSNLVTNVVREDEKKHVEESN.

It belongs to the RbfA family. Monomer. Binds 30S ribosomal subunits, but not 50S ribosomal subunits or 70S ribosomes.

It is found in the cytoplasm. Functionally, one of several proteins that assist in the late maturation steps of the functional core of the 30S ribosomal subunit. Associates with free 30S ribosomal subunits (but not with 30S subunits that are part of 70S ribosomes or polysomes). Required for efficient processing of 16S rRNA. May interact with the 5'-terminal helix region of 16S rRNA. The chain is Ribosome-binding factor A from Haemophilus influenzae (strain ATCC 51907 / DSM 11121 / KW20 / Rd).